A 205-amino-acid chain; its full sequence is uncharacterized protein (205 aa).

5 consecutive transmembrane segments (helical) span residues 5–25 (VWLAYLLTAVVFSLAPGSGTV), 41–61 (GAIIGLQIGLACHIVLVGIGI), 68–88 (SALAFTLIKWIGAAYLVWLGI), 117–137 (LINLTNPKSIVFLVALFPQFI), and 147–167 (FLVLGITTVTIDAIVMFGYTA).

The protein belongs to the Rht family.

Its subcellular location is the cell inner membrane. Functionally, involved in positive regulation of motility and negative regulation of biofilm formation. This is an uncharacterized protein from Vibrio cholerae serotype O1 (strain ATCC 39315 / El Tor Inaba N16961).